Reading from the N-terminus, the 451-residue chain is Phosphoglucosamine mutase (451 aa).

Ser-101 (phosphoserine intermediate) is an active-site residue. Residues Ser-101, Asp-240, Asp-242, and Asp-244 each contribute to the Mg(2+) site. At Ser-101 the chain carries Phosphoserine.

Belongs to the phosphohexose mutase family. The cofactor is Mg(2+). Activated by phosphorylation.

The enzyme catalyses alpha-D-glucosamine 1-phosphate = D-glucosamine 6-phosphate. Its function is as follows. Catalyzes the conversion of glucosamine-6-phosphate to glucosamine-1-phosphate. In Alkalilimnicola ehrlichii (strain ATCC BAA-1101 / DSM 17681 / MLHE-1), this protein is Phosphoglucosamine mutase.